Reading from the N-terminus, the 129-residue chain is Serum amyloid A protein (129 aa).

Positions 1-18 are cleaved as a signal peptide; it reads MKLFTGLVFCSLVLGVSS. Gln-19 is subject to Pyrrolidone carboxylic acid. The segment at 88-129 is disordered; it reads FFRHGNSGHGAEDSKADQAANEWGRSGKDPNHFRPAGLPSKY. The propeptide at 112 to 129 is often cleaved during amyloidogenesis; that stretch reads RSGKDPNHFRPAGLPSKY.

It belongs to the SAA family. Expressed by the liver; secreted in plasma.

Its subcellular location is the secreted. Functionally, major acute phase reactant. Apolipoprotein of the HDL complex. The sequence is that of Serum amyloid A protein (SAA1) from Felis catus (Cat).